The sequence spans 274 residues: Diaminopimelate epimerase (274 aa).

Substrate-binding residues include asparagine 11 and asparagine 62. Residue cysteine 71 is the Proton donor of the active site. Substrate is bound by residues glycine 72–asparagine 73, asparagine 157, asparagine 190, and glutamate 208–arginine 209. Cysteine 217 (proton acceptor) is an active-site residue. Glycine 218–threonine 219 is a binding site for substrate.

Belongs to the diaminopimelate epimerase family. Homodimer.

It is found in the cytoplasm. The enzyme catalyses (2S,6S)-2,6-diaminopimelate = meso-2,6-diaminopimelate. Its pathway is amino-acid biosynthesis; L-lysine biosynthesis via DAP pathway; DL-2,6-diaminopimelate from LL-2,6-diaminopimelate: step 1/1. Its function is as follows. Catalyzes the stereoinversion of LL-2,6-diaminopimelate (L,L-DAP) to meso-diaminopimelate (meso-DAP), a precursor of L-lysine and an essential component of the bacterial peptidoglycan. The sequence is that of Diaminopimelate epimerase from Elusimicrobium minutum (strain Pei191).